The following is a 158-amino-acid chain: Large ribosomal subunit protein mL50 (158 aa).

It belongs to the mitochondrion-specific ribosomal protein mL50 family. Component of the mitochondrial ribosome large subunit (39S) which comprises a 16S rRNA and about 50 distinct proteins.

Its subcellular location is the mitochondrion. The protein is Large ribosomal subunit protein mL50 (MRPL50) of Pongo abelii (Sumatran orangutan).